A 398-amino-acid polypeptide reads, in one-letter code: Succinate--CoA ligase [ADP-forming] subunit beta (398 aa).

The ATP-grasp domain occupies 9–253 (KELLKSYGVA…EAEEDPKELE (245 aa)). ATP is bound by residues Lys46, 53 to 55 (GRG), Glu108, Cys111, and Glu116. Asn208 and Asp222 together coordinate Mg(2+). Substrate contacts are provided by residues Asn273 and 330 to 332 (GIM).

The protein belongs to the succinate/malate CoA ligase beta subunit family. In terms of assembly, heterotetramer of two alpha and two beta subunits. Mg(2+) serves as cofactor.

The catalysed reaction is succinate + ATP + CoA = succinyl-CoA + ADP + phosphate. The enzyme catalyses GTP + succinate + CoA = succinyl-CoA + GDP + phosphate. It participates in carbohydrate metabolism; tricarboxylic acid cycle; succinate from succinyl-CoA (ligase route): step 1/1. Succinyl-CoA synthetase functions in the citric acid cycle (TCA), coupling the hydrolysis of succinyl-CoA to the synthesis of either ATP or GTP and thus represents the only step of substrate-level phosphorylation in the TCA. The beta subunit provides nucleotide specificity of the enzyme and binds the substrate succinate, while the binding sites for coenzyme A and phosphate are found in the alpha subunit. This is Succinate--CoA ligase [ADP-forming] subunit beta from Acidiphilium cryptum (strain JF-5).